The primary structure comprises 59 residues: UPF0434 protein COSY_0767 (59 aa).

The protein belongs to the UPF0434 family.

This Vesicomyosocius okutanii subsp. Calyptogena okutanii (strain HA) protein is UPF0434 protein COSY_0767.